The sequence spans 735 residues: Photosystem I P700 chlorophyll a apoprotein A2 (735 aa).

Helical transmembrane passes span 47–70 (IFASHFGQLAIIFLWTSGNLFHVA), 136–159 (LYVGSVFLALVSAIFLFAGWLHLQ), 176–200 (LNHHLSGLFGVSSLAWTGHLVHVAI), 274–292 (MAHHHLAIAVLFIVAGHMY), 331–354 (LHFQLGLALASVGTICSLVAQHMY), 370–396 (AALYTHHQYIAGFIMCGAFAHGAIFWI), 418–440 (AIISHLSWVSLFLGFHTLGLYVH), and 518–536 (FLVHHAIALGLHTTTLILV). Residues C560 and C569 each coordinate [4Fe-4S] cluster. Helical transmembrane passes span 576-597 (AFYLAVFWMLNTIGWVTFYWHW) and 644-666 (LSVWAWMFLAGHLVYATGFMFLI). The chlorophyll a site is built by H655, M663, and Y671. Residue W672 participates in phylloquinone binding. Residues 708–728 (LVGLAHFSVGYVFTYAAFVIA) form a helical membrane-spanning segment.

This sequence belongs to the PsaA/PsaB family. As to quaternary structure, the PsaA/B heterodimer binds the P700 chlorophyll special pair and subsequent electron acceptors. PSI consists of a core antenna complex that captures photons, and an electron transfer chain that converts photonic excitation into a charge separation. The eukaryotic PSI reaction center is composed of at least 11 subunits. P700 is a chlorophyll a/chlorophyll a' dimer, A0 is one or more chlorophyll a, A1 is one or both phylloquinones and FX is a shared 4Fe-4S iron-sulfur center. is required as a cofactor.

It localises to the plastid. It is found in the chloroplast thylakoid membrane. The enzyme catalyses reduced [plastocyanin] + hnu + oxidized [2Fe-2S]-[ferredoxin] = oxidized [plastocyanin] + reduced [2Fe-2S]-[ferredoxin]. Its function is as follows. PsaA and PsaB bind P700, the primary electron donor of photosystem I (PSI), as well as the electron acceptors A0, A1 and FX. PSI is a plastocyanin/cytochrome c6-ferredoxin oxidoreductase, converting photonic excitation into a charge separation, which transfers an electron from the donor P700 chlorophyll pair to the spectroscopically characterized acceptors A0, A1, FX, FA and FB in turn. Oxidized P700 is reduced on the lumenal side of the thylakoid membrane by plastocyanin or cytochrome c6. The polypeptide is Photosystem I P700 chlorophyll a apoprotein A2 (Tetradesmus obliquus (Green alga)).